The sequence spans 511 residues: Bifunctional purine biosynthesis protein PurH (511 aa).

Residues 1–147 (MIQIKRALIS…KNYKHTLVLT (147 aa)) enclose the MGS-like domain.

The protein belongs to the PurH family.

It carries out the reaction (6R)-10-formyltetrahydrofolate + 5-amino-1-(5-phospho-beta-D-ribosyl)imidazole-4-carboxamide = 5-formamido-1-(5-phospho-D-ribosyl)imidazole-4-carboxamide + (6S)-5,6,7,8-tetrahydrofolate. The catalysed reaction is IMP + H2O = 5-formamido-1-(5-phospho-D-ribosyl)imidazole-4-carboxamide. Its pathway is purine metabolism; IMP biosynthesis via de novo pathway; 5-formamido-1-(5-phospho-D-ribosyl)imidazole-4-carboxamide from 5-amino-1-(5-phospho-D-ribosyl)imidazole-4-carboxamide (10-formyl THF route): step 1/1. The protein operates within purine metabolism; IMP biosynthesis via de novo pathway; IMP from 5-formamido-1-(5-phospho-D-ribosyl)imidazole-4-carboxamide: step 1/1. This chain is Bifunctional purine biosynthesis protein PurH, found in Leptospira borgpetersenii serovar Hardjo-bovis (strain JB197).